Reading from the N-terminus, the 394-residue chain is Phosphopentomutase (394 aa).

Residues D14, D287, H292, D328, H329, and H340 each contribute to the Mn(2+) site.

This sequence belongs to the phosphopentomutase family. Mn(2+) is required as a cofactor.

It is found in the cytoplasm. It catalyses the reaction 2-deoxy-alpha-D-ribose 1-phosphate = 2-deoxy-D-ribose 5-phosphate. The enzyme catalyses alpha-D-ribose 1-phosphate = D-ribose 5-phosphate. The protein operates within carbohydrate degradation; 2-deoxy-D-ribose 1-phosphate degradation; D-glyceraldehyde 3-phosphate and acetaldehyde from 2-deoxy-alpha-D-ribose 1-phosphate: step 1/2. Functionally, isomerase that catalyzes the conversion of deoxy-ribose 1-phosphate (dRib-1-P) and ribose 1-phosphate (Rib-1-P) to deoxy-ribose 5-phosphate (dRib-5-P) and ribose 5-phosphate (Rib-5-P), respectively. The chain is Phosphopentomutase from Shouchella clausii (strain KSM-K16) (Alkalihalobacillus clausii).